The following is a 394-amino-acid chain: Probable purine permease 8 (394 aa).

Helical transmembrane passes span 45 to 65 (WLRI…STIL), 77 to 97 (TWMG…FRFF), 113 to 133 (FSSF…VSAN), 139 to 159 (VGLL…QLAF), 172 to 192 (FTPF…LLVV), 208 to 228 (VIGI…LSLV), 247 to 267 (LVAY…FASG), 289 to 309 (TLAS…GLIF), 315 to 335 (FSNS…VIVF), and 344 to 364 (IFSI…HYLD). Positions 373–394 (TSPVGDPHLLPAEEGHTNIHSV) are disordered. Basic and acidic residues predominate over residues 383–394 (PAEEGHTNIHSV).

This sequence belongs to the purine permeases (TC 2.A.7.14) family.

The protein localises to the membrane. In Arabidopsis thaliana (Mouse-ear cress), this protein is Probable purine permease 8 (PUP8).